Consider the following 239-residue polypeptide: Leucyl/phenylalanyl-tRNA--protein transferase (239 aa).

Belongs to the L/F-transferase family.

It localises to the cytoplasm. The enzyme catalyses N-terminal L-lysyl-[protein] + L-leucyl-tRNA(Leu) = N-terminal L-leucyl-L-lysyl-[protein] + tRNA(Leu) + H(+). The catalysed reaction is N-terminal L-arginyl-[protein] + L-leucyl-tRNA(Leu) = N-terminal L-leucyl-L-arginyl-[protein] + tRNA(Leu) + H(+). It carries out the reaction L-phenylalanyl-tRNA(Phe) + an N-terminal L-alpha-aminoacyl-[protein] = an N-terminal L-phenylalanyl-L-alpha-aminoacyl-[protein] + tRNA(Phe). In terms of biological role, functions in the N-end rule pathway of protein degradation where it conjugates Leu, Phe and, less efficiently, Met from aminoacyl-tRNAs to the N-termini of proteins containing an N-terminal arginine or lysine. This is Leucyl/phenylalanyl-tRNA--protein transferase from Syntrophus aciditrophicus (strain SB).